An 854-amino-acid polypeptide reads, in one-letter code: Protein translocase subunit SecA (854 aa).

Residues Gln89, 107-111 (GEGKT), and Asp501 contribute to the ATP site.

This sequence belongs to the SecA family. Monomer and homodimer. Part of the essential Sec protein translocation apparatus which comprises SecA, SecYEG and auxiliary proteins SecDF-YajC and YidC.

Its subcellular location is the cell inner membrane. It localises to the cytoplasm. It carries out the reaction ATP + H2O + cellular proteinSide 1 = ADP + phosphate + cellular proteinSide 2.. Its function is as follows. Part of the Sec protein translocase complex. Interacts with the SecYEG preprotein conducting channel. Has a central role in coupling the hydrolysis of ATP to the transfer of proteins into and across the cell membrane, serving both as a receptor for the preprotein-SecB complex and as an ATP-driven molecular motor driving the stepwise translocation of polypeptide chains across the membrane. The polypeptide is Protein translocase subunit SecA (Pelagibacter ubique (strain HTCC1062)).